Reading from the N-terminus, the 549-residue chain is Hydroxylamine reductase (549 aa).

Residues C5, C8, C17, and C23 each coordinate [4Fe-4S] cluster. Hybrid [4Fe-2O-2S] cluster-binding residues include H242, E266, C310, C402, C430, C455, E490, and K492. C402 is modified (cysteine persulfide).

Belongs to the HCP family. Requires [4Fe-4S] cluster as cofactor. The cofactor is hybrid [4Fe-2O-2S] cluster.

It is found in the cytoplasm. It carries out the reaction A + NH4(+) + H2O = hydroxylamine + AH2 + H(+). Its function is as follows. Catalyzes the reduction of hydroxylamine to form NH(3) and H(2)O. This chain is Hydroxylamine reductase, found in Clostridium novyi (strain NT).